A 445-amino-acid chain; its full sequence is Histamine H3 receptor (445 aa).

Topologically, residues 1-39 (MERAPPDGPLNASGALAGEAAAAGGARGFSAAWTAVLAA) are extracellular. N-linked (GlcNAc...) asparagine glycosylation is present at Asn11. Residues 40 to 60 (LMALLIVATVLGNALVMLAFV) traverse the membrane as a helical segment. The Cytoplasmic portion of the chain corresponds to 61–70 (ADSSLRTQNN). The helical transmembrane segment at 71–91 (FFLLNLAISDFLVGAFCIPLY) threads the bilayer. At 92-108 (VPYVLTGRWTFGRGLCK) the chain is on the extracellular side. A disulfide bridge links Cys107 with Cys188. A helical membrane pass occupies residues 109 to 129 (LWLVVDYLLCTSSAFNIVLIS). Residues 130–156 (YDRFLSVTRAVSYRAQQGDTRRAVRKM) lie on the Cytoplasmic side of the membrane. A helical transmembrane segment spans residues 157-177 (LLVWVLAFLLYGPAILSWEYL). Over 178-196 (SGGSSIPEGHCYAEFFYNW) the chain is Extracellular. Residues 197–217 (YFLITASTLEFFTPFLSVTFF) form a helical membrane-spanning segment. Residues 218–359 (NLSIYLNIQR…LSRDRKVAKS (142 aa)) lie on the Cytoplasmic side of the membrane. Disordered regions lie at residues 237 to 260 (REAA…GCWG) and 288 to 336 (EATL…LEKR). Residues 242–257 (PEPPPEAQPSPPPPPG) show a composition bias toward pro residues. Positions 290–299 (TLGGGGGGGS) are enriched in gly residues. The segment covering 300–312 (VASPTSSSGSSSR) has biased composition (low complexity). The helical transmembrane segment at 360-380 (LAVIVSIFGLCWAPYTLLMII) threads the bilayer. Residues 381–395 (RAACHGHCVPDYWYE) are Extracellular-facing. The helical transmembrane segment at 396–416 (TSFWLLWANSAVNPVLYPLCH) threads the bilayer. The Cytoplasmic portion of the chain corresponds to 417 to 445 (HSFRRAFTKLLCPQKLKIQPHSSLEHCWK). The residue at position 439 (Ser439) is a Phosphoserine.

Belongs to the G-protein coupled receptor 1 family. In terms of tissue distribution, expressed predominantly in the CNS, with the greatest expression in the thalamus and caudate nucleus. The various isoforms are mainly coexpressed in brain, but their relative expression level varies in a region-specific manner. Isoform 3 and isoform 7 are highly expressed in the thalamus, caudate nucleus and cerebellum while isoform 5 and isoform 6 show a poor expression. Isoform 5 and isoform 6 show a high expression in the amygdala, substantia nigra, cerebral cortex and hypothalamus. Isoform 7 is not found in hypothalamus or substantia nigra.

Its subcellular location is the cell membrane. The H3 subclass of histamine receptors could mediate the histamine signals in CNS and peripheral nervous system. Signals through the inhibition of adenylate cyclase and displays high constitutive activity (spontaneous activity in the absence of agonist). Agonist stimulation of isoform 3 neither modified adenylate cyclase activity nor induced intracellular calcium mobilization. The chain is Histamine H3 receptor (HRH3) from Homo sapiens (Human).